Here is a 453-residue protein sequence, read N- to C-terminus: Glutamyl-tRNA(Gln) amidotransferase subunit A (453 aa).

Residues lysine 55 and serine 130 each act as charge relay system in the active site. The Acyl-ester intermediate role is filled by serine 154.

This sequence belongs to the amidase family. GatA subfamily. In terms of assembly, heterotrimer of A, B and C subunits.

It carries out the reaction L-glutamyl-tRNA(Gln) + L-glutamine + ATP + H2O = L-glutaminyl-tRNA(Gln) + L-glutamate + ADP + phosphate + H(+). Its function is as follows. Allows the formation of correctly charged Gln-tRNA(Gln) through the transamidation of misacylated Glu-tRNA(Gln) in organisms which lack glutaminyl-tRNA synthetase. The reaction takes place in the presence of glutamine and ATP through an activated gamma-phospho-Glu-tRNA(Gln). The sequence is that of Glutamyl-tRNA(Gln) amidotransferase subunit A from Aliarcobacter butzleri (strain RM4018) (Arcobacter butzleri).